We begin with the raw amino-acid sequence, 103 residues long: Somatostatin-2 (103 aa).

The first 21 residues, 1 to 21, serve as a signal peptide directing secretion; the sequence is MLGSAGTLLLLLLAWGARALS. Positions 22 to 87 are excised as a propeptide; it reads QPDDNRITTG…VKFPRLSLRE (66 aa). Cysteine 92 and cysteine 103 are oxidised to a cystine.

This sequence belongs to the somatostatin family.

The protein localises to the secreted. Its function is as follows. Somatostatin inhibits the release of somatotropin. The polypeptide is Somatostatin-2 (sst2) (Pelophylax ridibundus (Marsh frog)).